We begin with the raw amino-acid sequence, 104 residues long: Large ribosomal subunit protein uL24 (104 aa).

The protein belongs to the universal ribosomal protein uL24 family. In terms of assembly, part of the 50S ribosomal subunit.

Its function is as follows. One of two assembly initiator proteins, it binds directly to the 5'-end of the 23S rRNA, where it nucleates assembly of the 50S subunit. In terms of biological role, one of the proteins that surrounds the polypeptide exit tunnel on the outside of the subunit. The polypeptide is Large ribosomal subunit protein uL24 (Methylorubrum extorquens (strain PA1) (Methylobacterium extorquens)).